Reading from the N-terminus, the 135-residue chain is Glutaredoxin-C5 (135 aa).

The 106-residue stretch at 29 to 134 (AERVERLASE…PLLKEAGALW (106 aa)) folds into the Glutaredoxin domain. The cysteines at positions 49 and 52 are disulfide-linked. Residues 132–135 (ALWL) carry the Responsive for interaction with TGA factors motif.

Belongs to the glutaredoxin family. CC-type subfamily.

The protein localises to the cytoplasm. The protein resides in the nucleus. In terms of biological role, has a glutathione-disulfide oxidoreductase activity in the presence of NADPH and glutathione reductase. Reduces low molecular weight disulfides and proteins. This is Glutaredoxin-C5 (GRXC5) from Oryza sativa subsp. japonica (Rice).